A 1033-amino-acid chain; its full sequence is SIT4-associating protein SAP190 (1033 aa).

4 disordered regions span residues 32–82, 147–213, 768–813, and 828–1033; these read DQDD…TTES, PEII…QVET, FGND…HDSG, and ENEE…KEAF. Over residues 158–170 the composition is skewed to basic and acidic residues; it reads ILIERDRKDKKED. A compositionally biased stretch (acidic residues) spans 171 to 182; the sequence is AEEGGDSEETTN. A compositionally biased stretch (basic and acidic residues) spans 183 to 195; it reads DSDHDSGDERSVD. Position 774 is a phosphoserine (S774). Composition is skewed to acidic residues over residues 784 to 793 and 828 to 838; these read SEDIIGDTEG and ENEEDYAEYSD. Residues S857, S862, and S892 each carry the phosphoserine modification. Basic and acidic residues predominate over residues 858–879; sequence DDGKSKSAESEFTDKISEHRDG. Over residues 909–924 the composition is skewed to polar residues; the sequence is SRSQPSDPKLQDQNIF. Acidic residues predominate over residues 932–944; it reads GVGDDDDYMDPND. T990 carries the phosphothreonine modification. The residue at position 991 (S991) is a Phosphoserine. Positions 1000–1018 are enriched in acidic residues; it reads ISSDEEDSEDEDEENDMGN.

This sequence belongs to the SAPS family. In terms of assembly, associates with the SIT4 protein phosphatase catalytic subunit in a cell-cycle-dependent manner. Hyperphosphorylated in the absence of SIT4.

It is found in the cytoplasm. Functionally, positive regulator of protein phosphatase SIT4. Involved in the general amino acid control (GAAC) response regulated by TOR. Involved in the dephosphorylation of the elongator complex subunit IKI3. This is SIT4-associating protein SAP190 (SAP190) from Saccharomyces cerevisiae (strain AWRI1631) (Baker's yeast).